A 417-amino-acid chain; its full sequence is Serine hydroxymethyltransferase (417 aa).

Residues Leu-121 and 125–127 (GHL) each bind (6S)-5,6,7,8-tetrahydrofolate. An N6-(pyridoxal phosphate)lysine modification is found at Lys-229. 355–357 (SPF) contacts (6S)-5,6,7,8-tetrahydrofolate.

Belongs to the SHMT family. In terms of assembly, homodimer. It depends on pyridoxal 5'-phosphate as a cofactor.

It localises to the cytoplasm. It carries out the reaction (6R)-5,10-methylene-5,6,7,8-tetrahydrofolate + glycine + H2O = (6S)-5,6,7,8-tetrahydrofolate + L-serine. The protein operates within one-carbon metabolism; tetrahydrofolate interconversion. It participates in amino-acid biosynthesis; glycine biosynthesis; glycine from L-serine: step 1/1. In terms of biological role, catalyzes the reversible interconversion of serine and glycine with tetrahydrofolate (THF) serving as the one-carbon carrier. This reaction serves as the major source of one-carbon groups required for the biosynthesis of purines, thymidylate, methionine, and other important biomolecules. Also exhibits THF-independent aldolase activity toward beta-hydroxyamino acids, producing glycine and aldehydes, via a retro-aldol mechanism. The sequence is that of Serine hydroxymethyltransferase from Shewanella sp. (strain ANA-3).